The sequence spans 145 residues: Chaperonin GroEL (145 aa).

The protein belongs to the chaperonin (HSP60) family. Forms a cylinder of 14 subunits composed of two heptameric rings stacked back-to-back. Interacts with the co-chaperonin GroES.

The protein localises to the cytoplasm. The catalysed reaction is ATP + H2O + a folded polypeptide = ADP + phosphate + an unfolded polypeptide.. In terms of biological role, together with its co-chaperonin GroES, plays an essential role in assisting protein folding. The GroEL-GroES system forms a nano-cage that allows encapsulation of the non-native substrate proteins and provides a physical environment optimized to promote and accelerate protein folding. In Thermus thermophilus, this protein is Chaperonin GroEL.